We begin with the raw amino-acid sequence, 286 residues long: D-tagatose-1,6-bisphosphate aldolase subunit KbaY (286 aa).

Asp82 functions as the Proton donor in the catalytic mechanism. Zn(2+) contacts are provided by His83 and His180. Gly181 lines the dihydroxyacetone phosphate pocket. His208 is a Zn(2+) binding site. Dihydroxyacetone phosphate-binding positions include 209-211 and 230-233; these read GAS and NVAT.

This sequence belongs to the class II fructose-bisphosphate aldolase family. TagBP aldolase KbaY subfamily. As to quaternary structure, homotetramer. Forms a complex with KbaZ. Zn(2+) serves as cofactor.

The enzyme catalyses D-tagatofuranose 1,6-bisphosphate = D-glyceraldehyde 3-phosphate + dihydroxyacetone phosphate. It functions in the pathway carbohydrate metabolism; D-tagatose 6-phosphate degradation; D-glyceraldehyde 3-phosphate and glycerone phosphate from D-tagatose 6-phosphate: step 2/2. Catalytic subunit of the tagatose-1,6-bisphosphate aldolase KbaYZ, which catalyzes the reversible aldol condensation of dihydroxyacetone phosphate (DHAP or glycerone-phosphate) with glyceraldehyde 3-phosphate (G3P) to produce tagatose 1,6-bisphosphate (TBP). Requires KbaZ subunit for full activity and stability. This Escherichia coli O45:K1 (strain S88 / ExPEC) protein is D-tagatose-1,6-bisphosphate aldolase subunit KbaY.